A 586-amino-acid polypeptide reads, in one-letter code: Probable transporter AQR1 (586 aa).

Disordered regions lie at residues Met1–Ala44 and Glu61–Gln82. Residues Met1 to Lys99 are Extracellular-facing. Residues Asn19–Asn40 are compositionally biased toward basic and acidic residues. The chain crosses the membrane as a helical span at residues Trp100–Tyr120. Over Tyr121–Asn139 the chain is Cytoplasmic. A helical transmembrane segment spans residues Val140–Ala160. Topologically, residues Asp161–Arg166 are extracellular. A helical transmembrane segment spans residues Pro167 to Pro187. A topological domain (cytoplasmic) is located at residue Ser188. The helical transmembrane segment at Tyr189–Ile209 threads the bilayer. Over Ser210 to Thr225 the chain is Extracellular. The chain crosses the membrane as a helical span at residues Phe226 to Ala246. The Cytoplasmic segment spans residues Val247–Arg255. The chain crosses the membrane as a helical span at residues Ala256 to Leu276. Residues Pro277–Lys334 are Extracellular-facing. The helical transmembrane segment at Ile335 to Trp355 threads the bilayer. The Cytoplasmic portion of the chain corresponds to Thr356–His374. A helical membrane pass occupies residues Leu375–Phe395. Residues Thr396–Leu433 are Extracellular-facing. The helical transmembrane segment at Val434–Ile454 threads the bilayer. At Asp455–Arg459 the chain is on the cytoplasmic side. The helical transmembrane segment at Ile460–Thr480 threads the bilayer. Topologically, residues Ser481–Thr523 are extracellular. Residues Val524–Ile544 traverse the membrane as a helical segment. Topologically, residues Pro545–Asn586 are cytoplasmic.

This sequence belongs to the major facilitator superfamily. CAR1 family.

The protein localises to the membrane. Probable transporter that confers resistance to short-chain monocarboxylic acids and quinidine. The protein is Probable transporter AQR1 (AQR1) of Saccharomyces cerevisiae (strain ATCC 204508 / S288c) (Baker's yeast).